Here is a 153-residue protein sequence, read N- to C-terminus: UPF0266 membrane protein YPTB1631 (153 aa).

The next 3 helical transmembrane spans lie at 6–26 (LVLV…EFIM), 45–65 (LDCM…VMAH), and 67–87 (APLT…ISYI).

Belongs to the UPF0266 family.

Its subcellular location is the cell inner membrane. The chain is UPF0266 membrane protein YPTB1631 from Yersinia pseudotuberculosis serotype I (strain IP32953).